Consider the following 424-residue polypeptide: Histidine--tRNA ligase (424 aa).

This sequence belongs to the class-II aminoacyl-tRNA synthetase family. Homodimer.

The protein localises to the cytoplasm. It catalyses the reaction tRNA(His) + L-histidine + ATP = L-histidyl-tRNA(His) + AMP + diphosphate + H(+). The protein is Histidine--tRNA ligase of Marinomonas sp. (strain MWYL1).